The sequence spans 495 residues: Syntaphilin (495 aa).

The segment at 1–74 (MAMSLQGSRR…HGIKPPTPEQ (74 aa)) is disordered. A compositionally biased stretch (low complexity) spans 7–49 (GSRRASAGSRRRTSPPVSVRDAYGTSSLSSSSNSGSCKGSDSS). Residues 79 to 161 (LQQKEVCIRH…VKNNLIDKDK (83 aa)) adopt a coiled-coil conformation. The tract at residues 191–244 (VAKEEGTGESAGGSPARSLTRSSTYTKLSDPAVCGDRQPGDPSNTSAEDGADSG) is disordered. Phosphoserine occurs at positions 200 and 204. A compositionally biased stretch (polar residues) spans 207 to 217 (RSLTRSSTYTK). Threonine 214 is modified (phosphothreonine). The residue at position 219 (serine 219) is a Phosphoserine. Phosphothreonine is present on threonine 235. Residues 427–446 (YIVDLLAVVVPAVPTVAWLC) form a helical membrane-spanning segment.

In terms of assembly, binds to STX1A. Interacts with DNM1; this interaction inhibits the binding of DNM1 to AMPH and DNM1-receptor-mediated endocytosis.

It localises to the membrane. The protein resides in the synapse. It is found in the synaptosome. In terms of biological role, inhibits SNARE complex formation by absorbing free STX1A. This chain is Syntaphilin, found in Mus musculus (Mouse).